The sequence spans 602 residues: Glutaminase liver isoform, mitochondrial (602 aa).

Residues 1-14 constitute a mitochondrion transit peptide; it reads MRSMRALQNALSRA. Disordered stretches follow at residues 1 to 29 and 45 to 66; these read MRSM…PSRG and AQGR…ASHS. A substrate-binding site is contributed by S219. An N6-succinyllysine modification is found at K253. Residue N268 coordinates substrate. An N6-acetyllysine mark is found at K279 and K284. Positions 314 and 321 each coordinate substrate. K329 carries the post-translational modification N6-acetyllysine. Substrate contacts are provided by Y347, Y399, and V417. ANK repeat units lie at residues 518–551 and 552–585; these read DSRT…VKDR and WGNI…SETQ.

It belongs to the glutaminase family. Homotetramer, dimer of dimers. Does not assemble into higher oligomers. Interacts with the PDZ domain of the syntrophin SNTA1. Interacts with the PDZ domain of TAX1BP3.

It is found in the mitochondrion. The catalysed reaction is L-glutamine + H2O = L-glutamate + NH4(+). With respect to regulation, enzyme activity is not stimulated by phosphate. Phosphate increases kcat, but decreases substrate affinity, resulting in unchanged enzyme activity. Its function is as follows. Plays an important role in the regulation of glutamine catabolism. Promotes mitochondrial respiration and increases ATP generation in cells by catalyzing the synthesis of glutamate and alpha-ketoglutarate. Increases cellular anti-oxidant function via NADH and glutathione production. May play a role in preventing tumor proliferation. The chain is Glutaminase liver isoform, mitochondrial (Gls2) from Mus musculus (Mouse).